We begin with the raw amino-acid sequence, 529 residues long: Glutamyl-tRNA(Gln) amidotransferase subunit B-2, chloroplastic/mitochondrial (529 aa).

A disordered region spans residues 17–61 (STRVSLPRGSIPPPPTSSSSSSSSSREGRRPRFFSTTTTSAERPV).

Belongs to the GatB/GatE family. GatB subfamily. In terms of assembly, subunit of the heterotrimeric GatCAB amidotransferase (AdT) complex, composed of A, B and C subunits.

The protein resides in the mitochondrion. The protein localises to the plastid. It localises to the chloroplast. The catalysed reaction is L-glutamyl-tRNA(Gln) + L-glutamine + ATP + H2O = L-glutaminyl-tRNA(Gln) + L-glutamate + ADP + phosphate + H(+). Functionally, allows the formation of correctly charged Gln-tRNA(Gln) through the transamidation of misacylated Glu-tRNA(Gln) in chloroplasts and mitochondria. The reaction takes place in the presence of glutamine and ATP through an activated gamma-phospho-Glu-tRNA(Gln). The sequence is that of Glutamyl-tRNA(Gln) amidotransferase subunit B-2, chloroplastic/mitochondrial from Micromonas commoda (strain RCC299 / NOUM17 / CCMP2709) (Picoplanktonic green alga).